The following is a 154-amino-acid chain: Host transcription reprogramming factor 5 (154 aa).

The signal sequence occupies residues 1-19 (MQILRIAQLMALLATCASA). The interval 24 to 85 (TGSRVYSRDV…KRIKAEQNAR (62 aa)) is disordered. The segment covering 35 to 50 (QTQGGFSGSPTTNSPD) has biased composition (polar residues). Residues 69 to 85 (ETEKERKKRIKAEQNAR) are compositionally biased toward basic and acidic residues. The C2H2-type; degenerate zinc finger occupies 96-121 (YQCPYCSDPTVFSHSDALGRHIYTIH).

The protein localises to the secreted. It localises to the host nucleus. Probable secreted effector that translocates into the nuclei of host cells to reprogram the expression of targeted genes by binding on effector binding elements in rice. This Pyricularia oryzae (strain 70-15 / ATCC MYA-4617 / FGSC 8958) (Rice blast fungus) protein is Host transcription reprogramming factor 5.